A 350-amino-acid chain; its full sequence is Biotin synthase 1 (350 aa).

The 226-residue stretch at 71-296 folds into the Radical SAM core domain; sequence EEVEVEGIIS…KTILRFAGGR (226 aa). [4Fe-4S] cluster-binding residues include cysteine 86, cysteine 90, and cysteine 93. The [2Fe-2S] cluster site is built by cysteine 129, cysteine 221, and arginine 291.

This sequence belongs to the radical SAM superfamily. Biotin synthase family. In terms of assembly, homodimer. [4Fe-4S] cluster is required as a cofactor. [2Fe-2S] cluster serves as cofactor.

It catalyses the reaction (4R,5S)-dethiobiotin + (sulfur carrier)-SH + 2 reduced [2Fe-2S]-[ferredoxin] + 2 S-adenosyl-L-methionine = (sulfur carrier)-H + biotin + 2 5'-deoxyadenosine + 2 L-methionine + 2 oxidized [2Fe-2S]-[ferredoxin]. It participates in cofactor biosynthesis; biotin biosynthesis; biotin from 7,8-diaminononanoate: step 2/2. Catalyzes the conversion of dethiobiotin (DTB) to biotin by the insertion of a sulfur atom into dethiobiotin via a radical-based mechanism. This chain is Biotin synthase 1, found in Corynebacterium diphtheriae (strain ATCC 700971 / NCTC 13129 / Biotype gravis).